Here is a 492-residue protein sequence, read N- to C-terminus: N-succinylglutamate 5-semialdehyde dehydrogenase (492 aa).

220-225 lines the NAD(+) pocket; sequence GSANTG. Catalysis depends on residues glutamate 243 and cysteine 277.

It belongs to the aldehyde dehydrogenase family. AstD subfamily.

The enzyme catalyses N-succinyl-L-glutamate 5-semialdehyde + NAD(+) + H2O = N-succinyl-L-glutamate + NADH + 2 H(+). The protein operates within amino-acid degradation; L-arginine degradation via AST pathway; L-glutamate and succinate from L-arginine: step 4/5. Functionally, catalyzes the NAD-dependent reduction of succinylglutamate semialdehyde into succinylglutamate. This Escherichia coli O81 (strain ED1a) protein is N-succinylglutamate 5-semialdehyde dehydrogenase.